A 777-amino-acid polypeptide reads, in one-letter code: Glucocorticoid receptor (777 aa).

Residues 1–14 (MDSKESLTPGKEEN) show a composition bias toward basic and acidic residues. Residues 1–21 (MDSKESLTPGKEENPSSVLTQ) form a disordered region. The modulating stretch occupies residues 1–420 (MDSKESLTPG…TATTGPPPKL (420 aa)). Thr8 carries the post-translational modification Phosphothreonine. The residue at position 23 (Arg23) is an Omega-N-methylarginine. Residues Ser45, Ser113, Ser134, and Ser141 each carry the phosphoserine modification. Residues 130–182 (NRSTSVPENPKSSASSSVSAAPKEKEFPKTHSDVSSEQQNLKGQTGTNGGNVK) form a disordered region. Residues 134–150 (SVPENPKSSASSSVSAA) show a composition bias toward low complexity. A compositionally biased stretch (basic and acidic residues) spans 151-163 (PKEKEFPKTHSDV). Over residues 164–174 (SSEQQNLKGQT) the composition is skewed to polar residues. 3 positions are modified to phosphoserine: Ser203, Ser211, and Ser226. Residue Lys258 forms a Glycyl lysine isopeptide (Lys-Gly) (interchain with G-Cter in SUMO2) linkage. A Phosphoserine modification is found at Ser267. Residues Lys277 and Lys293 each participate in a glycyl lysine isopeptide (Lys-Gly) (interchain with G-Cter in SUMO); alternate cross-link. Glycyl lysine isopeptide (Lys-Gly) (interchain with G-Cter in SUMO2); alternate cross-links involve residues Lys277 and Lys293. The segment covering 394–414 (SSPSMRPDVSSPPSSSSTATT) has biased composition (low complexity). The disordered stretch occupies residues 394–415 (SSPSMRPDVSSPPSSSSTATTG). Ser404 is modified (phosphoserine). Lys419 is covalently cross-linked (Glycyl lysine isopeptide (Lys-Gly) (interchain with G-Cter in ubiquitin)). 2 NR C4-type zinc fingers span residues 421–441 (CLVC…CGSC) and 457–481 (CAGR…YRKC). The segment at residues 421–486 (CLVCSDEASG…RYRKCLQAGM (66 aa)) is a DNA-binding region (nuclear receptor). An N6-acetyllysine mark is found at Lys480, Lys492, Lys494, and Lys495. The segment at 485–777 (GMNLEARKTK…NIKKLLFHQK (293 aa)) is interaction with CLOCK. A hinge region spans residues 487-523 (NLEARKTKKKIKGIQQATTGVSQETSENPANKTIVPA). The 235-residue stretch at 524 to 758 (TLPQLTPTLV…FPEMLAEIIT (235 aa)) folds into the NR LBD domain. An interaction with CRY1 region spans residues 532–697 (LVSLLEVIEP…EIRMTYIKEL (166 aa)). A Glycyl lysine isopeptide (Lys-Gly) (interchain with G-Cter in SUMO) cross-link involves residue Lys703.

The protein belongs to the nuclear hormone receptor family. NR3 subfamily. Heteromultimeric cytoplasmic complex with HSP90AA1, HSPA1A/HSPA1B, and FKBP5 or another immunophilin such as PPID, STIP1, or the immunophilin homolog PPP5C. Upon ligand binding FKBP5 dissociates from the complex and FKBP4 takes its place, thereby linking the complex to dynein and mediating transport to the nucleus, where the complex dissociates. Probably forms a complex composed of chaperones HSP90 and HSP70, co-chaperones CDC37, PPP5C, TSC1 and client protein TSC2, CDK4, AKT, RAF1 and NR3C1; this complex does not contain co-chaperones STIP1/HOP and PTGES3/p23. Directly interacts with UNC45A. Binds to DNA as a homodimer, and as heterodimer with NR3C2 or the retinoid X receptor. Binds STAT5A and STAT5B homodimers and heterodimers. Interacts with NRIP1, POU2F1, POU2F2 and TRIM28. Interacts with several coactivator complexes, including the SMARCA4 complex, CREBBP/EP300, TADA2L (Ada complex) and p160 coactivators such as NCOA2 and NCOA6. Interaction with BAG1 inhibits transactivation. Interacts with HEXIM1 and TGFB1I1. Interacts with NCOA1. Interacts with NCOA3, SMARCA4, SMARCC1, SMARCD1, and SMARCE1. Interacts with CLOCK, CRY1 and CRY2 in a ligand-dependent fashion. Interacts with CIART. Interacts with RWDD3. Interacts with UBE2I/UBC9 and this interaction is enhanced in the presence of RWDD3. Interacts with GRIP1. Interacts with NR4A3 (via nuclear receptor DNA-binding domain), represses transcription activity of NR4A3 on the POMC promoter Nur response element (NurRE). Directly interacts with PNRC2 to attract and form a complex with UPF1 and DCP1A; the interaction leads to rapid mRNA degradation. Interacts with GSK3B. Interacts with FNIP1 and FNIP2. Interacts (via C-terminus) with HNRNPU (via C-terminus). Interacts with MCM3AP. Interacts (via domain NR LBD) with HSP90AA1 and HSP90AB1. In the absence of hormonal ligand, interacts with TACC1. Interacts (via NR LBD domain) with ZNF764 (via KRAB domain); the interaction regulates transcription factor activity of NR3C1 by directing its actions toward certain biologic pathways. In terms of processing, acetylation by CLOCK reduces its binding to glucocorticoid response elements and its transcriptional activity. Increased proteasome-mediated degradation in response to glucocorticoids. Post-translationally, phosphorylated in the absence of hormone; becomes hyperphosphorylated in the presence of glucocorticoid. The Ser-203, Ser-226 and Ser-404-phosphorylated forms are mainly cytoplasmic, and the Ser-211-phosphorylated form is nuclear. Phosphorylation at Ser-211 increases transcriptional activity. Phosphorylation at Ser-203, Ser-226 and Ser-404 decreases signaling capacity. Phosphorylation at Ser-404 may protect from glucocorticoid-induced apoptosis. Phosphorylation at Ser-203 and Ser-211 is not required in regulation of chromosome segregation. May be dephosphorylated by PPP5C, attenuates NR3C1 action. In terms of processing, ubiquitinated by UBR5, leading to its degradation: UBR5 specifically recognizes and binds ligand-bound NR3C1 when it is not associated with coactivators (NCOAs). In presence of NCOAs, the UBR5-degron is not accessible, preventing its ubiquitination and degradation. Sumoylation at Lys-277 and Lys-293 negatively regulates its transcriptional activity. Sumoylation at Lys-703 positively regulates its transcriptional activity in the presence of RWDD3. Sumoylation at Lys-277 and Lys-293 is dispensable whereas sumoylation at Lys-703 is critical for the stimulatory effect of RWDD3 on its transcriptional activity. Heat shock increases sumoylation in a RWDD3-dependent manner. Within the infant and adult hippocampal formation, highest expression observed in the DG granule cell layer with moderate levels in the DG hilus, the CA2-CA4 pyramidal cell layer and the proximal part of the CA1 pyramidal cell layer. Moderate to high expression levels found in the presubiculum and in its' superficial layers. Weak but specific expression detected throughout the entire corticle mantle. In the amygdala, moderate levels were detected in the lateral, central and medial nuclei. Moderate expression levels were present in the PVNh alongside the third ventricle.

The protein resides in the cytoplasm. It localises to the nucleus. Its subcellular location is the mitochondrion. The protein localises to the cytoskeleton. It is found in the spindle. The protein resides in the microtubule organizing center. It localises to the centrosome. Its subcellular location is the chromosome. The protein localises to the nucleoplasm. Functionally, receptor for glucocorticoids (GC). Has a dual mode of action: as a transcription factor that binds to glucocorticoid response elements (GRE), both for nuclear and mitochondrial DNA, and as a modulator of other transcription factors. Affects inflammatory responses, cellular proliferation and differentiation in target tissues. Involved in chromatin remodeling. Plays a role in rapid mRNA degradation by binding to the 5' UTR of target mRNAs and interacting with PNRC2 in a ligand-dependent manner which recruits the RNA helicase UPF1 and the mRNA-decapping enzyme DCP1A, leading to RNA decay. Could act as a coactivator for STAT5-dependent transcription upon growth hormone (GH) stimulation and could reveal an essential role of hepatic GR in the control of body growth. Mediates glucocorticoid-induced apoptosis. Promotes accurate chromosome segregation during mitosis. May act as a tumor suppressor. May play a negative role in adipogenesis through the regulation of lipolytic and antilipogenic gene expression. The sequence is that of Glucocorticoid receptor (NR3C1) from Callithrix jacchus (White-tufted-ear marmoset).